The sequence spans 407 residues: Carbamoyl phosphate synthase small chain (407 aa).

Residues 1–205 (MTETTPKTAP…LQDGYGEQDA (205 aa)) are CPSase. L-glutamine contacts are provided by serine 60, glycine 257, and glycine 259. Positions 209–397 (HVVALDFGVK…INLIRERKGQ (189 aa)) constitute a Glutamine amidotransferase type-1 domain. Cysteine 286 functions as the Nucleophile in the catalytic mechanism. L-glutamine is bound by residues leucine 287, glutamine 290, asparagine 328, glycine 330, and phenylalanine 331. Catalysis depends on residues histidine 370 and glutamate 372.

It belongs to the CarA family. In terms of assembly, composed of two chains; the small (or glutamine) chain promotes the hydrolysis of glutamine to ammonia, which is used by the large (or ammonia) chain to synthesize carbamoyl phosphate. Tetramer of heterodimers (alpha,beta)4.

It carries out the reaction hydrogencarbonate + L-glutamine + 2 ATP + H2O = carbamoyl phosphate + L-glutamate + 2 ADP + phosphate + 2 H(+). It catalyses the reaction L-glutamine + H2O = L-glutamate + NH4(+). It functions in the pathway amino-acid biosynthesis; L-arginine biosynthesis; carbamoyl phosphate from bicarbonate: step 1/1. It participates in pyrimidine metabolism; UMP biosynthesis via de novo pathway; (S)-dihydroorotate from bicarbonate: step 1/3. Small subunit of the glutamine-dependent carbamoyl phosphate synthetase (CPSase). CPSase catalyzes the formation of carbamoyl phosphate from the ammonia moiety of glutamine, carbonate, and phosphate donated by ATP, constituting the first step of 2 biosynthetic pathways, one leading to arginine and/or urea and the other to pyrimidine nucleotides. The small subunit (glutamine amidotransferase) binds and cleaves glutamine to supply the large subunit with the substrate ammonia. This Brucella suis (strain ATCC 23445 / NCTC 10510) protein is Carbamoyl phosphate synthase small chain.